The primary structure comprises 763 residues: Putative alpha-1,3-mannosyltransferase MNN15 (763 aa).

Over 1 to 7 (MRFTLKK) the chain is Cytoplasmic. The helical transmembrane segment at 8 to 28 (IFFVFLTLLIISIGYLLLQSV) threads the bilayer. Topologically, residues 29–763 (DLQRIRELLH…KDATTVRLRI (735 aa)) are lumenal. N-linked (GlcNAc...) asparagine glycosylation is found at Asn71, Asn157, and Asn169. The disordered stretch occupies residues 617-659 (LVPPDLPNQREPGSPPDTKPEMEFRKSWKSRKKDTDEINEKLP). A compositionally biased stretch (basic and acidic residues) spans 649–659 (KDTDEINEKLP).

The protein belongs to the MNN1/MNT family.

It localises to the golgi apparatus membrane. The protein operates within protein modification; protein glycosylation. Its function is as follows. Responsible for addition of the terminal mannose residues to the outer chain of core N-linked polysaccharides and to O-linked mannotriose. Implicated in late Golgi modifications. This chain is Putative alpha-1,3-mannosyltransferase MNN15 (MNN15), found in Candida albicans (strain SC5314 / ATCC MYA-2876) (Yeast).